The following is a 126-amino-acid chain: Adult-specific rigid cuticular protein 12.4 (126 aa).

A Chitin-binding type R&amp;R domain is found at 9–87 (GGAYNFGFNT…AMAALAPKAP (79 aa)).

In terms of biological role, component of the rigid cuticle of the spider. In Araneus diadematus (European garden spider), this protein is Adult-specific rigid cuticular protein 12.4.